Reading from the N-terminus, the 112-residue chain is MKKCRGRPKCPRRVEQTPDITYFKPRGVPLSDLEVVSLTVEELEALRLVDIEGLRQEDAASRVGISRRAFWEDLKSARMKVAIALSKGKAIEIKGGNYIRAESSDINEDADT.

This sequence belongs to the UPF0251 family.

The chain is UPF0251 protein MA_4245 from Methanosarcina acetivorans (strain ATCC 35395 / DSM 2834 / JCM 12185 / C2A).